Consider the following 119-residue polypeptide: Large ribosomal subunit protein bL20 (119 aa).

This sequence belongs to the bacterial ribosomal protein bL20 family.

Functionally, binds directly to 23S ribosomal RNA and is necessary for the in vitro assembly process of the 50S ribosomal subunit. It is not involved in the protein synthesizing functions of that subunit. The sequence is that of Large ribosomal subunit protein bL20 from Geobacillus thermodenitrificans (strain NG80-2).